A 291-amino-acid chain; its full sequence is Glycine--tRNA ligase alpha subunit (291 aa).

This sequence belongs to the class-II aminoacyl-tRNA synthetase family. Tetramer of two alpha and two beta subunits.

It is found in the cytoplasm. It carries out the reaction tRNA(Gly) + glycine + ATP = glycyl-tRNA(Gly) + AMP + diphosphate. This is Glycine--tRNA ligase alpha subunit from Trichlorobacter lovleyi (strain ATCC BAA-1151 / DSM 17278 / SZ) (Geobacter lovleyi).